The chain runs to 445 residues: KICSTOR subunit 2 (445 aa).

This sequence belongs to the KICS2 family. In terms of assembly, part of the KICSTOR complex composed of KPTN, ITFG2, KICS2 and SZT2. SZT2 probably serves as a link between the other three proteins in the KICSTOR complex and may mediate the direct interaction with the GATOR complex via GATOR1. The KICSTOR complex interacts directly with the GATOR1 complex and most probably indirectly with the GATOR2 complex in an amino acid-independent manner.

Its subcellular location is the lysosome membrane. As part of the KICSTOR complex functions in the amino acid-sensing branch of the TORC1 signaling pathway. Recruits, in an amino acid-independent manner, the GATOR1 complex to the lysosomal membranes and allows its interaction with GATOR2 and the RAG GTPases. Functions upstream of the RAG GTPases and is required to negatively regulate mTORC1 signaling in absence of amino acids. In absence of the KICSTOR complex mTORC1 is constitutively localized to the lysosome and activated. The KICSTOR complex is also probably involved in the regulation of mTORC1 by glucose. In Homo sapiens (Human), this protein is KICSTOR subunit 2.